A 185-amino-acid chain; its full sequence is Ribosome-recycling factor (185 aa).

The segment at 135–159 is disordered; sequence ANDKLKASEKNKEASEDEVKRAQEK.

The protein belongs to the RRF family.

The protein resides in the cytoplasm. In terms of biological role, responsible for the release of ribosomes from messenger RNA at the termination of protein biosynthesis. May increase the efficiency of translation by recycling ribosomes from one round of translation to another. The sequence is that of Ribosome-recycling factor from Moorella thermoacetica (strain ATCC 39073 / JCM 9320).